Reading from the N-terminus, the 359-residue chain is Membrane-bound lytic murein transglycosylase C (359 aa).

The signal sequence occupies residues 1–16 (MKKYLALALIAPLLIS). Cysteine 17 is lipidated: N-palmitoyl cysteine. A lipid anchor (S-diacylglycerol cysteine) is attached at cysteine 17.

It belongs to the transglycosylase Slt family.

The protein localises to the cell outer membrane. The enzyme catalyses Exolytic cleavage of the (1-&gt;4)-beta-glycosidic linkage between N-acetylmuramic acid (MurNAc) and N-acetylglucosamine (GlcNAc) residues in peptidoglycan, from either the reducing or the non-reducing ends of the peptidoglycan chains, with concomitant formation of a 1,6-anhydrobond in the MurNAc residue.. Functionally, murein-degrading enzyme. May play a role in recycling of muropeptides during cell elongation and/or cell division. The sequence is that of Membrane-bound lytic murein transglycosylase C from Shigella flexneri serotype 5b (strain 8401).